Reading from the N-terminus, the 549-residue chain is Tigger transposable element-derived protein 7 (549 aa).

The 52-residue stretch at 1 to 52 folds into the HTH psq-type domain; sequence MNKRGKYTTLNLEEKMKVLSRIEAGRSLKSVMDEFGISKSTFYDIKKNKKLI. 2 DNA-binding regions (H-T-H motif) span residues 28-48 and 101-132; these read LKSVMDEFGISKSTFYDIKKN and VELQAAAERFARCFGRTDFKASTGWLFRFRNR. An HTH CENPB-type domain is found at 68-139; the sequence is KRKRTTGAKY…RNRHAIGNRK (72 aa). Residues 169–399 enclose the DDE-1 domain; that stretch reads LCLAQLYSGD…VKQITIANAW (231 aa). The tract at residues 527-549 is disordered; that stretch reads FLKPRPHNIKDSFSGPSTSGSNH. Polar residues predominate over residues 540 to 549; it reads SGPSTSGSNH.

This sequence belongs to the tigger transposable element derived protein family. Expressed in all tissues tested. Higher expression in testis and ovary.

Its subcellular location is the nucleus. The sequence is that of Tigger transposable element-derived protein 7 (TIGD7) from Homo sapiens (Human).